The primary structure comprises 92 residues: Small ribosomal subunit protein uS19c (92 aa).

This sequence belongs to the universal ribosomal protein uS19 family.

It localises to the plastid. It is found in the chloroplast. In terms of biological role, protein S19 forms a complex with S13 that binds strongly to the 16S ribosomal RNA. The protein is Small ribosomal subunit protein uS19c of Liriodendron tulipifera (Tuliptree).